Here is a 693-residue protein sequence, read N- to C-terminus: Protein FAM13A (693 aa).

Ser19 bears the Phosphoserine mark. Disordered stretches follow at residues 56 to 89 (SNAGDQSSEDSEPGPSSASSIPTRQRGHQFKKQD) and 136 to 233 (RSKP…VPDM). Positions 69–78 (GPSSASSIPT) are enriched in polar residues. Over residues 159–171 (LSMESLSSMQSQE) the composition is skewed to low complexity. Residues 184–197 (ESKEIERGGRDTQH) show a composition bias toward basic and acidic residues. Phosphoserine occurs at positions 267 and 287. Disordered regions lie at residues 302-331 (DTEVPPSPPNSHSFMRRRSSSLGSYDDEQE) and 396-424 (ISEEDLTPRTRQRSNTLPKSFGSQLEKED). At Ser397 the chain carries Phosphoserine. The residue at position 402 (Thr402) is a Phosphothreonine. A compositionally biased stretch (polar residues) spans 408–418 (RSNTLPKSFGS).

This sequence belongs to the FAM13 family. As to quaternary structure, interacts with ANXA2. As to expression, expressed in the mammary gland, with similar levels at all stages of development, including pregnancy, lactation and involution.

Functionally, (Microbial infection) Plays a role in the clearance of Pseudomonas aeruginosa by macrophages. In complex with ANXA2, promotes activation of Rho GTPases following P.aeruginosa infection. This chain is Protein FAM13A (Fam13a), found in Mus musculus (Mouse).